The sequence spans 206 residues: Flavin prenyltransferase UbiX (206 aa).

Residues G11–S13, S37, S103–T106, and R138 each bind FMN. Residues Y168 and R184 each contribute to the dimethylallyl phosphate site.

This sequence belongs to the UbiX/PAD1 family.

The enzyme catalyses dimethylallyl phosphate + FMNH2 = prenylated FMNH2 + phosphate. Flavin prenyltransferase that catalyzes the synthesis of the prenylated FMN cofactor (prenyl-FMN) for 4-hydroxy-3-polyprenylbenzoic acid decarboxylase UbiD. The prenyltransferase is metal-independent and links a dimethylallyl moiety from dimethylallyl monophosphate (DMAP) to the flavin N5 and C6 atoms of FMN. The sequence is that of Flavin prenyltransferase UbiX from Synechocystis sp. (strain ATCC 27184 / PCC 6803 / Kazusa).